The primary structure comprises 70 residues: Putative membrane protein insertion efficiency factor (70 aa).

It belongs to the UPF0161 family.

It is found in the cell inner membrane. Functionally, could be involved in insertion of integral membrane proteins into the membrane. The protein is Putative membrane protein insertion efficiency factor of Rhizorhabdus wittichii (strain DSM 6014 / CCUG 31198 / JCM 15750 / NBRC 105917 / EY 4224 / RW1) (Sphingomonas wittichii).